The sequence spans 372 residues: 4-hydroxy-3-methylbut-2-en-1-yl diphosphate synthase (flavodoxin) (372 aa).

[4Fe-4S] cluster is bound by residues C270, C273, C305, and E312.

This sequence belongs to the IspG family. It depends on [4Fe-4S] cluster as a cofactor.

The enzyme catalyses (2E)-4-hydroxy-3-methylbut-2-enyl diphosphate + oxidized [flavodoxin] + H2O + 2 H(+) = 2-C-methyl-D-erythritol 2,4-cyclic diphosphate + reduced [flavodoxin]. The protein operates within isoprenoid biosynthesis; isopentenyl diphosphate biosynthesis via DXP pathway; isopentenyl diphosphate from 1-deoxy-D-xylulose 5-phosphate: step 5/6. Converts 2C-methyl-D-erythritol 2,4-cyclodiphosphate (ME-2,4cPP) into 1-hydroxy-2-methyl-2-(E)-butenyl 4-diphosphate. In Shigella boydii serotype 18 (strain CDC 3083-94 / BS512), this protein is 4-hydroxy-3-methylbut-2-en-1-yl diphosphate synthase (flavodoxin).